Here is a 121-residue protein sequence, read N- to C-terminus: MTQSTEDTLLRLAAVIDSRKGGDPDQSYVSRLFHKGDDAVLKKIGEEATEVVLAAKDVRQGGAPTALVGEVADLWFHCLVMLSHFDLSPADVIAELERREGLSGIEEKALRKRREREENGG.

This sequence belongs to the PRA-PH family.

The protein resides in the cytoplasm. The catalysed reaction is 1-(5-phospho-beta-D-ribosyl)-ATP + H2O = 1-(5-phospho-beta-D-ribosyl)-5'-AMP + diphosphate + H(+). The protein operates within amino-acid biosynthesis; L-histidine biosynthesis; L-histidine from 5-phospho-alpha-D-ribose 1-diphosphate: step 2/9. The polypeptide is Phosphoribosyl-ATP pyrophosphatase (Burkholderia cenocepacia (strain ATCC BAA-245 / DSM 16553 / LMG 16656 / NCTC 13227 / J2315 / CF5610) (Burkholderia cepacia (strain J2315))).